Reading from the N-terminus, the 233-residue chain is Putative T-box protein 41 (233 aa).

The segment at residues 1 to 146 (MTVTRNGCRI…MNPHARHFLK (146 aa)) is a DNA-binding region (T-box).

Its subcellular location is the nucleus. The protein is Putative T-box protein 41 (tbx-41) of Caenorhabditis elegans.